The following is a 434-amino-acid chain: ATP-dependent RNA helicase RhlB (434 aa).

Positions 9 to 37 (KKFADFPLKPEILAALNENGFEFCTPIQA) match the Q motif motif. The region spanning 40–219 (LPILLNAKDI…YDHMNDPEKV (180 aa)) is the Helicase ATP-binding domain. Residue 53–60 (AQTGTGKT) coordinates ATP. The DEAD box motif lies at 165-168 (DEAD). The 148-residue stretch at 243 to 390 (KMRLLLSLIE…VSNYDKDALL (148 aa)) folds into the Helicase C-terminal domain. The tract at residues 390 to 434 (LDDIPPPARIHRKPPTSRTRDGGSKGAHRSGGNTSRPPRHRTRRP) is disordered.

This sequence belongs to the DEAD box helicase family. RhlB subfamily. Component of the RNA degradosome, which is a multiprotein complex involved in RNA processing and mRNA degradation.

It localises to the cytoplasm. The catalysed reaction is ATP + H2O = ADP + phosphate + H(+). In terms of biological role, DEAD-box RNA helicase involved in RNA degradation. Has RNA-dependent ATPase activity and unwinds double-stranded RNA. The sequence is that of ATP-dependent RNA helicase RhlB from Shewanella frigidimarina (strain NCIMB 400).